A 260-amino-acid polypeptide reads, in one-letter code: UPF0246 protein SCO2297 (260 aa).

It belongs to the UPF0246 family.

This is UPF0246 protein SCO2297 from Streptomyces coelicolor (strain ATCC BAA-471 / A3(2) / M145).